The chain runs to 414 residues: FAD-dependent monooxygenase adaC (414 aa).

FAD-binding residues include E32, A43, R115, D325, and G338.

The protein belongs to the paxM FAD-dependent monooxygenase family. Requires FAD as cofactor.

The catalysed reaction is 3-(2,4-dioxopentyl)-3,6,8,9-tetrahydroxy-1-oxo-1,2,3,4-tetrahydroanthracene-2-carboxyl-[ACP] + NADPH + O2 + H(+) = 3-(2,4-dioxopentyl)-2,3,6,8,9-pentahydroxy-1-oxo-1,2,3,4-tetrahydroanthracene-2-carboxyl-[ACP] + NADP(+) + H2O. The protein operates within secondary metabolite biosynthesis. In terms of biological role, FAD-dependent monooxygenase; part of the gene cluster that mediates the biosynthesis of the linear tetracyclic TAN-1612 neuropeptide Y receptor antagonist. The decaketide backbone of TAN-1612 is synthesized by the non-reducing polyketide synthase adaA via condensation of one acetyl-CoA starter unit with 9 malonyl-CoA units. The FAD-dependent monooxygenase adaC then performs hydroxylation at C2 while the polaketide chain is still attached to the NRPKS adaA. The alpha-hydroxylation step at C2 appears to be crucial for the following C18-C1 Claisen cyclization and release of the C9-hydroxyl version of TAN-1612 from the NRPKS adaA, two steps performed by the lactamase-like protein adaB. Finally, the O-methyltransferase adaD performs the C9 O-methylation to complete the biosynthesis of TAN-1612. The sequence is that of FAD-dependent monooxygenase adaC from Aspergillus niger (strain ATCC MYA-4892 / CBS 513.88 / FGSC A1513).